Here is a 278-residue protein sequence, read N- to C-terminus: NAD-dependent protein deacylase (278 aa).

The Deacetylase sirtuin-type domain maps to 22 to 270; that stretch reads RSRIFHRDSA…PEYIREFLTT (249 aa). 46–65 lines the NAD(+) pocket; that stretch reads GAGISAESGIRTFRADDGLW. The substrate site is built by tyrosine 90 and arginine 93. NAD(+) is bound at residue 127–130; it reads QNID. Histidine 145 acts as the Proton acceptor in catalysis. 2 residues coordinate Zn(2+): cysteine 153 and cysteine 172. NAD(+) contacts are provided by residues 212-214, 238-240, and alanine 256; these read GTS and NLE.

This sequence belongs to the sirtuin family. Class III subfamily. Zn(2+) is required as a cofactor.

The protein localises to the cytoplasm. It catalyses the reaction N(6)-acetyl-L-lysyl-[protein] + NAD(+) + H2O = 2''-O-acetyl-ADP-D-ribose + nicotinamide + L-lysyl-[protein]. It carries out the reaction N(6)-succinyl-L-lysyl-[protein] + NAD(+) + H2O = 2''-O-succinyl-ADP-D-ribose + nicotinamide + L-lysyl-[protein]. The catalysed reaction is N(6)-(2-hydroxyisobutanoyl)-L-lysyl-[protein] + NAD(+) + H2O = 2''-O-(2-hydroxyisobutanoyl)-ADP-D-ribose + nicotinamide + L-lysyl-[protein]. NAD-dependent lysine deacetylase that specifically removes acetyl groups on target proteins. Also acts as a protein-lysine deacylase by mediating protein desuccinylation and de-2-hydroxyisobutyrylation. Modulates the activities of several proteins which are inactive in their acylated form. This chain is NAD-dependent protein deacylase, found in Yersinia pestis.